We begin with the raw amino-acid sequence, 1840 residues long: Collagen alpha-1(V) chain (1840 aa).

The signal sequence occupies residues 1 to 30 (MDVHTRWKAPRPGAPLLSSPLLLLLLLLWA). Residues 72-244 (DVAYRVSKDA…DYCEHYSPDC (173 aa)) enclose the Laminin G-like domain. Residues 231-445 (RAAYDYCEHY…MPANQDTIYE (215 aa)) form a nonhelical region region. 8 positions are modified to sulfotyrosine: tyrosine 234, tyrosine 236, tyrosine 240, tyrosine 262, tyrosine 263, tyrosine 336, tyrosine 338, and tyrosine 344. Disordered stretches follow at residues 241–547 (SPDC…QESQ) and 561–1576 (GPAG…EVIQ). Over residues 258–268 (NPDEYYPEGEG) the composition is skewed to acidic residues. Low complexity-rich tracts occupy residues 335–352 (DYDYVPTDDYYTTSPYED), 375–387 (PTSTSVTSNSSNP), and 462–471 (IIEPGMLIEG). Residues 446 to 560 (GIGGPRGEKG…ILQQARLALR (115 aa)) form an interrupted collagenous region region. Residues 472-487 (PPGPEGPAGLPGPPGT) are compositionally biased toward pro residues. Low complexity-rich tracts occupy residues 508–525 (LPGADGLPGPPGTMLMLP) and 561–572 (GPAGPMGLTGRP). The interval 561 to 1572 (GPAGPMGLTG…GLPGPPGPPG (1012 aa)) is triple-helical region. Proline 572, proline 578, and proline 623 each carry 4-hydroxyproline. 5-hydroxylysine is present on lysine 629. The residue at position 641 (proline 641) is a 4-hydroxyproline. 5-hydroxylysine is present on lysine 644. 5 positions are modified to 4-hydroxyproline: proline 650, proline 656, proline 659, proline 677, and proline 680. The segment covering 673 to 688 (PRGLPGEPGPRGLLGP) has biased composition (low complexity). 3-hydroxyproline is present on residues proline 682 and proline 688. A compositionally biased stretch (pro residues) spans 689–698 (KGPPGPPGPP). 4-hydroxyproline occurs at positions 692, 698, and 707. The residue at position 710 (lysine 710) is a 5-hydroxylysine. Proline 719, proline 722, proline 728, and proline 734 each carry 4-hydroxyproline. Residues 724–743 (QQGNPGAQGLPGPQGAIGPP) show a composition bias toward low complexity. Lysine 746 bears the 5-hydroxylysine mark. Low complexity predominate over residues 749–758 (LGKPGLPGMP). Residues proline 752, proline 758, proline 764, proline 767, and proline 773 each carry the 4-hydroxyproline modification. Lysine 776 carries the post-translational modification 5-hydroxylysine. 2 positions are modified to 4-hydroxyproline: proline 782 and proline 791. Residues lysine 797, lysine 806, lysine 809, and lysine 812 each carry the 5-hydroxylysine modification. Proline 818 carries the 4-hydroxyproline modification. Position 821 is a 5-hydroxylysine (lysine 821). Position 836 is a 4-hydroxyproline (proline 836). The span at 839 to 848 (RGEDGPEGPK) shows a compositional bias: basic and acidic residues. A 5-hydroxylysine mark is found at lysine 848 and lysine 866. A 4-hydroxyproline mark is found at proline 872, proline 875, and proline 878. 5-hydroxylysine is present on lysine 884. Proline 890 and proline 893 each carry 4-hydroxyproline. Lysine 899 is subject to 5-hydroxylysine. 2 positions are modified to 4-hydroxyproline: proline 905 and proline 908. A compositionally biased stretch (low complexity) spans 910–919 (PRGQRGPTGP). 4-hydroxyproline occurs at positions 932 and 947. 2 stretches are compositionally biased toward low complexity: residues 973–992 (KDGLPGHPGQRGETGFQGKT) and 1001–1013 (VGPQGPTGETGPM). Proline 1019, proline 1022, proline 1025, and proline 1031 each carry 4-hydroxyproline. The segment covering 1090 to 1106 (SPGERGPAGAAGPIGIP) has biased composition (low complexity). The segment covering 1108-1117 (RPGPQGPPGP) has biased composition (pro residues). 4-hydroxyproline is present on residues proline 1223 and proline 1226. A compositionally biased stretch (low complexity) spans 1261–1270 (PSGAPGADGP). Residues 1296-1305 (GLPGEGGPLG) show a composition bias toward gly residues. 2 stretches are compositionally biased toward pro residues: residues 1382–1400 (TGEPGPSGPPGKRGPPGPA) and 1456–1471 (SPGPDGPPGPMGPPGL). A 4-hydroxyproline mark is found at proline 1469 and proline 1472. Positions 1487–1496 (PGLIGLIGPP) are enriched in low complexity. The span at 1528 to 1543 (PLGPPGPPGLPGPPGP) shows a compositional bias: pro residues. The span at 1544 to 1556 (KGAKGSSGPTGPK) shows a compositional bias: low complexity. The interval 1573–1607 (EVIQPLPIQASRTRRNIDASQLLDDGAGESYVDYA) is nonhelical region. Residues tyrosine 1603 and tyrosine 1606 each carry the sulfotyrosine modification. The Fibrillar collagen NC1 domain maps to 1611 to 1839 (EEIFGSLNSL…GFEVGPACFL (229 aa)).

It belongs to the fibrillar collagen family. As to quaternary structure, trimers of two alpha 1(V) and one alpha 2(V) chains in most tissues and trimers of one alpha 1(V), one alpha 2(V), and one alpha 3(V) chains in placenta. Interacts with CSPG4. Post-translationally, prolines at the third position of the tripeptide repeating unit (G-X-Y) are hydroxylated in some or all of the chains. Sulfated on 40% of tyrosines. In terms of processing, hydroxylation on proline residues within the sequence motif, GXPG, is most likely to be 4-hydroxy as this fits the requirement for 4-hydroxylation in vertebrates. In terms of tissue distribution, a high molecular weight form was detected in Schwann cells and peripheral nerve. A lower, probably processed form, is detected in all other tissues tested (at protein level).

It localises to the secreted. It is found in the extracellular space. The protein localises to the extracellular matrix. Type V collagen is a member of group I collagen (fibrillar forming collagen). It is a minor connective tissue component of nearly ubiquitous distribution. Type V collagen binds to DNA, heparan sulfate, thrombospondin, heparin, and insulin. The sequence is that of Collagen alpha-1(V) chain (Col5a1) from Rattus norvegicus (Rat).